A 287-amino-acid polypeptide reads, in one-letter code: Probable prolyl 4-hydroxylase 3 (287 aa).

Over 1–16 the chain is Cytoplasmic; the sequence is MAKLRHSRFQARKWST. The helical; Signal-anchor for type II membrane protein transmembrane segment at 17-37 threads the bilayer; that stretch reads LMLVLFMLFMLTIVLLMLLAF. The Lumenal portion of the chain corresponds to 38–287; it reads GVFSLPINND…KWMHVGEYKI (250 aa). One can recognise a Fe2OG dioxygenase domain in the interval 159–282; the sequence is HGEGLQVLHY…KWSSTKWMHV (124 aa). His177 and Asp179 together coordinate Fe cation. A glycan (N-linked (GlcNAc...) asparagine) is linked at Asn218. His263 provides a ligand contact to Fe cation. Lys273 lines the 2-oxoglutarate pocket.

Belongs to the P4HA family. Fe(2+) serves as cofactor. Requires L-ascorbate as cofactor.

It is found in the endoplasmic reticulum membrane. The enzyme catalyses L-prolyl-[collagen] + 2-oxoglutarate + O2 = trans-4-hydroxy-L-prolyl-[collagen] + succinate + CO2. Catalyzes the post-translational formation of 4-hydroxyproline in -Xaa-Pro-Gly- sequences in proline-rich peptide sequences of plant glycoproteins and other proteins. Hydroxyprolines are important constituent of many plant cell wall glycoproteins such as extensins, hydroxyproline-rich glycoproteins, lectins and arabinogalactan proteins. In Arabidopsis thaliana (Mouse-ear cress), this protein is Probable prolyl 4-hydroxylase 3.